The sequence spans 538 residues: Bifunctional purine biosynthesis protein PurH (538 aa).

The MGS-like domain occupies 8–158; it reads IPAPDKVEIK…KNHAYVTILT (151 aa).

This sequence belongs to the PurH family.

The catalysed reaction is (6R)-10-formyltetrahydrofolate + 5-amino-1-(5-phospho-beta-D-ribosyl)imidazole-4-carboxamide = 5-formamido-1-(5-phospho-D-ribosyl)imidazole-4-carboxamide + (6S)-5,6,7,8-tetrahydrofolate. It carries out the reaction IMP + H2O = 5-formamido-1-(5-phospho-D-ribosyl)imidazole-4-carboxamide. It functions in the pathway purine metabolism; IMP biosynthesis via de novo pathway; 5-formamido-1-(5-phospho-D-ribosyl)imidazole-4-carboxamide from 5-amino-1-(5-phospho-D-ribosyl)imidazole-4-carboxamide (10-formyl THF route): step 1/1. The protein operates within purine metabolism; IMP biosynthesis via de novo pathway; IMP from 5-formamido-1-(5-phospho-D-ribosyl)imidazole-4-carboxamide: step 1/1. This chain is Bifunctional purine biosynthesis protein PurH, found in Rhizobium leguminosarum bv. trifolii (strain WSM2304).